A 244-amino-acid chain; its full sequence is Mono-ADP-ribosyltransferase C3 (244 aa).

A signal peptide spans 1–40 (MKGIRKSILCLVLSAGVIAPVTTSIVQSPQKCYACTVDKG). In terms of domain architecture, TR mART core spans 44–244 (DTFTEFTNVE…QIMITAMIFK (201 aa)). NAD(+) contacts are provided by residues T80, N87, R91, 128 to 131 (RGDD), and 167 to 169 (RTE). R128 is a catalytic residue. S174 is a catalytic residue. NAD(+)-binding positions include 182–185 (FGGR) and 211–213 (QLE). E213 is an active-site residue.

The protein to exoenzymes 3 of C.limosum and C.botulinum D phage, and to S.aureus ediN. As to quaternary structure, monomer.

It is found in the secreted. It catalyses the reaction L-asparaginyl-[protein] + NAD(+) = N(4)-(ADP-D-ribosyl)-L-asparaginyl-[protein] + nicotinamide + H(+). Its function is as follows. ADP-ribosylates eukaryotic Rho and Rac proteins on an asparagine residue. This chain is Mono-ADP-ribosyltransferase C3, found in Clostridium botulinum C phage (Clostridium botulinum C bacteriophage).